The primary structure comprises 278 residues: Rhamnulose-1-phosphate aldolase (278 aa).

Glutamate 116 is a catalytic residue. Zn(2+) is bound by residues histidine 139, histidine 141, and histidine 210.

It belongs to the aldolase class II family. RhaD subfamily. Requires Zn(2+) as cofactor.

It localises to the cytoplasm. It carries out the reaction L-rhamnulose 1-phosphate = (S)-lactaldehyde + dihydroxyacetone phosphate. It functions in the pathway carbohydrate degradation; L-rhamnose degradation; glycerone phosphate from L-rhamnose: step 3/3. In terms of biological role, catalyzes the reversible cleavage of L-rhamnulose-1-phosphate to dihydroxyacetone phosphate (DHAP) and L-lactaldehyde. The protein is Rhamnulose-1-phosphate aldolase of Listeria welshimeri serovar 6b (strain ATCC 35897 / DSM 20650 / CCUG 15529 / CIP 8149 / NCTC 11857 / SLCC 5334 / V8).